The primary structure comprises 155 residues: Transcriptional repressor NrdR (155 aa).

A zinc finger lies at 3–34; sequence CPFCHAEETKVVDSRLVADGAQVRRRRECLEC. The ATP-cone domain occupies 49–139; it reads PLIIKRDGRR…VYKRFKDVSD (91 aa).

Belongs to the NrdR family. The cofactor is Zn(2+).

Its function is as follows. Negatively regulates transcription of bacterial ribonucleotide reductase nrd genes and operons by binding to NrdR-boxes. The protein is Transcriptional repressor NrdR of Legionella pneumophila (strain Lens).